We begin with the raw amino-acid sequence, 347 residues long: Probable dual-specificity RNA methyltransferase RlmN (347 aa).

E93 serves as the catalytic Proton acceptor. A Radical SAM core domain is found at 100-323; the sequence is KAKRKTACVS…KKAGLNISTR (224 aa). Residues C107 and C334 are joined by a disulfide bond. Residues C114, C118, and C121 each contribute to the [4Fe-4S] cluster site. Residues 160–161, S192, 215–217, and N291 contribute to the S-adenosyl-L-methionine site; these read GE and SLT. Residue C334 is the S-methylcysteine intermediate of the active site.

This sequence belongs to the radical SAM superfamily. RlmN family. Requires [4Fe-4S] cluster as cofactor.

The protein resides in the cytoplasm. It carries out the reaction adenosine(2503) in 23S rRNA + 2 reduced [2Fe-2S]-[ferredoxin] + 2 S-adenosyl-L-methionine = 2-methyladenosine(2503) in 23S rRNA + 5'-deoxyadenosine + L-methionine + 2 oxidized [2Fe-2S]-[ferredoxin] + S-adenosyl-L-homocysteine. The enzyme catalyses adenosine(37) in tRNA + 2 reduced [2Fe-2S]-[ferredoxin] + 2 S-adenosyl-L-methionine = 2-methyladenosine(37) in tRNA + 5'-deoxyadenosine + L-methionine + 2 oxidized [2Fe-2S]-[ferredoxin] + S-adenosyl-L-homocysteine. In terms of biological role, specifically methylates position 2 of adenine 2503 in 23S rRNA and position 2 of adenine 37 in tRNAs. The sequence is that of Probable dual-specificity RNA methyltransferase RlmN from Treponema denticola (strain ATCC 35405 / DSM 14222 / CIP 103919 / JCM 8153 / KCTC 15104).